The chain runs to 299 residues: MMLIPTHHFRDIERKPEYLQPEKCAPPPFPGPVGTMWFIRDGCGIACAIVTWFLVLYAEFVVLFVMLIPSRDYAYSIINGIVFNLLAFLALASHCRAMLTDPGAVPKGNATKEFIESLQLKPGQVVYKCPKCCSIKPDRAHHCSVCKRCIRKMDHHCPWVNNCVGENNQKYFVLFTMYIALISLHALIMVGFHFLHCFEEDWTKCSSFSPPTTVILLILLCFEALLFLIFTSVMFGTQVHSICTDETGIEQLKKEERRWAKKTKWMNMKAVFGHPFSLGWASPFATPDQGKADPYQYVV.

At 1 to 47 (MMLIPTHHFRDIERKPEYLQPEKCAPPPFPGPVGTMWFIRDGCGIAC) the chain is on the cytoplasmic side. The residue at position 18 (Tyr18) is a Phosphotyrosine. A helical membrane pass occupies residues 48 to 68 (AIVTWFLVLYAEFVVLFVMLI). Residues 69 to 72 (PSRD) lie on the Lumenal side of the membrane. Residues 73–93 (YAYSIINGIVFNLLAFLALAS) form a helical membrane-spanning segment. At 94 to 171 (HCRAMLTDPG…NCVGENNQKY (78 aa)) the chain is on the cytoplasmic side. The DHHC domain occupies 128–254 (KCPKCCSIKP…DETGIEQLKK (127 aa)). The S-palmitoyl cysteine moiety is linked to residue Cys146. Residue Cys157 is the S-palmitoyl cysteine intermediate of the active site. The chain crosses the membrane as a helical span at residues 172-192 (FVLFTMYIALISLHALIMVGF). Residues 193–214 (HFLHCFEEDWTKCSSFSPPTTV) are Lumenal-facing. A helical membrane pass occupies residues 215–235 (ILLILLCFEALLFLIFTSVMF). Residues 236–299 (GTQVHSICTD…GKADPYQYVV (64 aa)) are Cytoplasmic-facing.

Belongs to the DHHC palmitoyltransferase family. Monomer. Homooligomers. The monomeric form has a higher catalytic activity. Forms heterooligomers with ZDHHC7. Interacts with TNFRSF10A. Phosphorylation by FGFR1 and SRC probably regulates the palmitoyltransferase activity. Post-translationally, autopalmitoylated.

The protein resides in the golgi apparatus membrane. The enzyme catalyses L-cysteinyl-[protein] + hexadecanoyl-CoA = S-hexadecanoyl-L-cysteinyl-[protein] + CoA. It carries out the reaction L-cysteinyl-[protein] + tetradecanoyl-CoA = S-tetradecanoyl-L-cysteinyl-[protein] + CoA. It catalyses the reaction L-cysteinyl-[protein] + octadecanoyl-CoA = S-octadecanoyl-L-cysteinyl-[protein] + CoA. Functionally, golgi-localized palmitoyltransferase that catalyzes the addition of palmitate onto various protein substrates. Has no stringent fatty acid selectivity and in addition to palmitate can also transfer onto target proteins myristate from tetradecanoyl-CoA and stearate from octadecanoyl-CoA. Plays an important role in G protein-coupled receptor signaling pathways involving GNAQ and potentially other heterotrimeric G proteins by regulating their dynamic association with the plasma membrane. Palmitoylates ITGA6 and ITGB4, thereby regulating the alpha-6/beta-4 integrin localization, expression and function in cell adhesion to laminin. Plays a role in the TRAIL-activated apoptotic signaling pathway most probably through the palmitoylation and localization to the plasma membrane of TNFRSF10A. In the brain, by palmitoylating the gamma subunit GABRG2 of GABA(A) receptors and regulating their postsynaptic accumulation, plays a role in synaptic GABAergic inhibitory function and GABAergic innervation. Palmitoylates the neuronal protein GAP43 which is also involved in the formation of GABAergic synapses. Palmitoylates NCDN thereby regulating its association with endosome membranes. Probably palmitoylates PRCD and is involved in its proper localization within the photoreceptor. Could mediate the palmitoylation of NCAM1 and regulate neurite outgrowth. Could palmitoylate DNAJC5 and regulate its localization to Golgi membranes. Also constitutively palmitoylates DLG4. May also palmitoylate SNAP25. Could palmitoylate the glutamate receptors GRIA1 and GRIA2 but this has not been confirmed in vivo. Could also palmitoylate the D(2) dopamine receptor DRD2. May also palmitoylate LAMTOR1, promoting its localization to lysosomal membranes. Palmitoylates the Toll-like receptor 9/TLR9 in the Golgi and thereby regulates TLR9 trafficking to endosomes. May palmitoylate CALHM1 and CALHM3 subunits of gustatory voltage-gated ion channels and modulate channel gating and kinetics. The polypeptide is Palmitoyltransferase ZDHHC3 (Rattus norvegicus (Rat)).